The chain runs to 173 residues: Crossover junction endodeoxyribonuclease RuvC (173 aa).

Active-site residues include aspartate 11, glutamate 71, and aspartate 143. Positions 11, 71, and 143 each coordinate Mg(2+).

It belongs to the RuvC family. As to quaternary structure, homodimer which binds Holliday junction (HJ) DNA. The HJ becomes 2-fold symmetrical on binding to RuvC with unstacked arms; it has a different conformation from HJ DNA in complex with RuvA. In the full resolvosome a probable DNA-RuvA(4)-RuvB(12)-RuvC(2) complex forms which resolves the HJ. Mg(2+) serves as cofactor.

It localises to the cytoplasm. It carries out the reaction Endonucleolytic cleavage at a junction such as a reciprocal single-stranded crossover between two homologous DNA duplexes (Holliday junction).. In terms of biological role, the RuvA-RuvB-RuvC complex processes Holliday junction (HJ) DNA during genetic recombination and DNA repair. Endonuclease that resolves HJ intermediates. Cleaves cruciform DNA by making single-stranded nicks across the HJ at symmetrical positions within the homologous arms, yielding a 5'-phosphate and a 3'-hydroxyl group; requires a central core of homology in the junction. The consensus cleavage sequence is 5'-(A/T)TT(C/G)-3'. Cleavage occurs on the 3'-side of the TT dinucleotide at the point of strand exchange. HJ branch migration catalyzed by RuvA-RuvB allows RuvC to scan DNA until it finds its consensus sequence, where it cleaves and resolves the cruciform DNA. This is Crossover junction endodeoxyribonuclease RuvC from Brucella suis (strain ATCC 23445 / NCTC 10510).